Here is a 526-residue protein sequence, read N- to C-terminus: Cytochrome P450 4e2 (526 aa).

2 residues coordinate heme: Glu-307 and Cys-444.

The protein belongs to the cytochrome P450 family. It depends on heme as a cofactor.

The protein localises to the endoplasmic reticulum membrane. Its subcellular location is the microsome membrane. May be involved in the metabolism of insect hormones and in the breakdown of synthetic insecticides. This is Cytochrome P450 4e2 (Cyp4e2) from Drosophila melanogaster (Fruit fly).